The primary structure comprises 458 residues: ATP synthase subunit beta (458 aa).

148 to 155 is a binding site for ATP; it reads GGAGVGKT.

This sequence belongs to the ATPase alpha/beta chains family. As to quaternary structure, F-type ATPases have 2 components, CF(1) - the catalytic core - and CF(0) - the membrane proton channel. CF(1) has five subunits: alpha(3), beta(3), gamma(1), delta(1), epsilon(1). CF(0) has three main subunits: a(1), b(2) and c(9-12). The alpha and beta chains form an alternating ring which encloses part of the gamma chain. CF(1) is attached to CF(0) by a central stalk formed by the gamma and epsilon chains, while a peripheral stalk is formed by the delta and b chains.

It is found in the cell inner membrane. It carries out the reaction ATP + H2O + 4 H(+)(in) = ADP + phosphate + 5 H(+)(out). Functionally, produces ATP from ADP in the presence of a proton gradient across the membrane. The catalytic sites are hosted primarily by the beta subunits. The sequence is that of ATP synthase subunit beta from Francisella tularensis subsp. novicida (strain U112).